The primary structure comprises 313 residues: tRNA dimethylallyltransferase (313 aa).

ATP is bound at residue 11–18; the sequence is GPTACGKT. 13-18 contacts substrate; the sequence is TACGKT. Interaction with substrate tRNA stretches follow at residues 36–39, 160–164, and 243–248; these read DSAL, QRIGR, and RCVGYR.

The protein belongs to the IPP transferase family. In terms of assembly, monomer. Mg(2+) is required as a cofactor.

The enzyme catalyses adenosine(37) in tRNA + dimethylallyl diphosphate = N(6)-dimethylallyladenosine(37) in tRNA + diphosphate. In terms of biological role, catalyzes the transfer of a dimethylallyl group onto the adenine at position 37 in tRNAs that read codons beginning with uridine, leading to the formation of N6-(dimethylallyl)adenosine (i(6)A). The protein is tRNA dimethylallyltransferase of Neisseria gonorrhoeae (strain ATCC 700825 / FA 1090).